Here is a 398-residue protein sequence, read N- to C-terminus: Dual-specificity RNA methyltransferase RlmN (398 aa).

Residue Glu119 is the Proton acceptor of the active site. In terms of domain architecture, Radical SAM core spans 125–364 (EEERATLCVS…TIVRKTRGDD (240 aa)). Cysteines 132 and 369 form a disulfide. [4Fe-4S] cluster is bound by residues Cys139, Cys143, and Cys146. S-adenosyl-L-methionine contacts are provided by residues 193-194 (GE), Ser225, 247-249 (SLH), and Asn326. Cys369 serves as the catalytic S-methylcysteine intermediate.

Belongs to the radical SAM superfamily. RlmN family. Requires [4Fe-4S] cluster as cofactor.

It localises to the cytoplasm. It catalyses the reaction adenosine(2503) in 23S rRNA + 2 reduced [2Fe-2S]-[ferredoxin] + 2 S-adenosyl-L-methionine = 2-methyladenosine(2503) in 23S rRNA + 5'-deoxyadenosine + L-methionine + 2 oxidized [2Fe-2S]-[ferredoxin] + S-adenosyl-L-homocysteine. The enzyme catalyses adenosine(37) in tRNA + 2 reduced [2Fe-2S]-[ferredoxin] + 2 S-adenosyl-L-methionine = 2-methyladenosine(37) in tRNA + 5'-deoxyadenosine + L-methionine + 2 oxidized [2Fe-2S]-[ferredoxin] + S-adenosyl-L-homocysteine. Specifically methylates position 2 of adenine 2503 in 23S rRNA and position 2 of adenine 37 in tRNAs. m2A2503 modification seems to play a crucial role in the proofreading step occurring at the peptidyl transferase center and thus would serve to optimize ribosomal fidelity. The protein is Dual-specificity RNA methyltransferase RlmN of Pectobacterium atrosepticum (strain SCRI 1043 / ATCC BAA-672) (Erwinia carotovora subsp. atroseptica).